A 420-amino-acid chain; its full sequence is D-tagatose-1,6-bisphosphate aldolase subunit GatZ (420 aa).

It belongs to the GatZ/KbaZ family. GatZ subfamily. In terms of assembly, forms a complex with GatY.

It functions in the pathway carbohydrate metabolism; D-tagatose 6-phosphate degradation; D-glyceraldehyde 3-phosphate and glycerone phosphate from D-tagatose 6-phosphate: step 2/2. Component of the tagatose-1,6-bisphosphate aldolase GatYZ that is required for full activity and stability of the Y subunit. Could have a chaperone-like function for the proper and stable folding of GatY. When expressed alone, GatZ does not show any aldolase activity. Is involved in the catabolism of galactitol. The polypeptide is D-tagatose-1,6-bisphosphate aldolase subunit GatZ (Escherichia coli O6:H1 (strain CFT073 / ATCC 700928 / UPEC)).